Consider the following 728-residue polypeptide: 1,4-alpha-glucan branching enzyme GlgB (728 aa).

Asp405 (nucleophile) is an active-site residue. The Proton donor role is filled by Glu458.

The protein belongs to the glycosyl hydrolase 13 family. GlgB subfamily. Monomer.

It catalyses the reaction Transfers a segment of a (1-&gt;4)-alpha-D-glucan chain to a primary hydroxy group in a similar glucan chain.. The protein operates within glycan biosynthesis; glycogen biosynthesis. In terms of biological role, catalyzes the formation of the alpha-1,6-glucosidic linkages in glycogen by scission of a 1,4-alpha-linked oligosaccharide from growing alpha-1,4-glucan chains and the subsequent attachment of the oligosaccharide to the alpha-1,6 position. The sequence is that of 1,4-alpha-glucan branching enzyme GlgB from Salmonella typhi.